A 136-amino-acid chain; its full sequence is Ig kappa chain V-V region MOPC 21 (136 aa).

Residues 1–29 (MHQTSMGIKMESHTLVFISILLCLYGADG) form the signal peptide. The interval 30–52 (NIVMTQSPKSMSMSVGERVTLTC) is framework-1. The interval 53–63 (KASENVVTYVS) is complementarity-determining-1. The framework-2 stretch occupies residues 64–78 (WYQQKPEQSPKLLIY). The interval 79–85 (GASNRYT) is complementarity-determining-2. The tract at residues 86–117 (GVPDRFTGSGSATDFTLTISSVQAEDLADYHC) is framework-3. Positions 118–126 (GQGYSYPYT) are complementarity-determining-3. Residues 127-136 (FGGGTKLEIK) are framework-4.

The chain is Ig kappa chain V-V region MOPC 21 from Mus musculus (Mouse).